Here is a 446-residue protein sequence, read N- to C-terminus: Glutamine synthetase (446 aa).

Positions 14–106 constitute a GS beta-grasp domain; the sequence is NNVKFIRFQF…VICDVYTTNG (93 aa). The GS catalytic domain maps to 113-446; the sequence is PRGCLKRVLA…DWETKQYLKI (334 aa). Positions 137 and 139 each coordinate Mg(2+). Residue glutamate 187 coordinates ATP. Glutamate 192 and glutamate 199 together coordinate Mg(2+). L-glutamate is bound by residues 243-244 and glycine 244; that span reads NG. Histidine 248 is a Mg(2+) binding site. ATP-binding positions include 250–252 and serine 252; that span reads HQS. Arginine 301, glutamate 307, and arginine 319 together coordinate L-glutamate. ATP contacts are provided by arginine 319, arginine 324, and lysine 331. Glutamate 336 provides a ligand contact to Mg(2+). Arginine 338 contacts L-glutamate.

This sequence belongs to the glutamine synthetase family. In terms of assembly, oligomer of 12 subunits arranged in the form of two hexagons. Mg(2+) is required as a cofactor.

The protein resides in the cytoplasm. It catalyses the reaction L-glutamate + NH4(+) + ATP = L-glutamine + ADP + phosphate + H(+). Its function is as follows. Probably involved in nitrogen metabolism via ammonium assimilation. Catalyzes the ATP-dependent biosynthesis of glutamine from glutamate and ammonia. The sequence is that of Glutamine synthetase from Methanococcus maripaludis (strain DSM 14266 / JCM 13030 / NBRC 101832 / S2 / LL).